The sequence spans 165 residues: Phosphopantetheine adenylyltransferase (165 aa).

Residue threonine 9 coordinates substrate. ATP is bound by residues 9 to 10 and histidine 17; that span reads TF. Positions 41, 73, and 87 each coordinate substrate. ATP is bound by residues 88–90, glutamate 98, and 123–129; these read GLR and YQFISGT.

The protein belongs to the bacterial CoaD family. As to quaternary structure, homohexamer. It depends on Mg(2+) as a cofactor.

Its subcellular location is the cytoplasm. It carries out the reaction (R)-4'-phosphopantetheine + ATP + H(+) = 3'-dephospho-CoA + diphosphate. Its pathway is cofactor biosynthesis; coenzyme A biosynthesis; CoA from (R)-pantothenate: step 4/5. In terms of biological role, reversibly transfers an adenylyl group from ATP to 4'-phosphopantetheine, yielding dephospho-CoA (dPCoA) and pyrophosphate. In Polynucleobacter necessarius subsp. necessarius (strain STIR1), this protein is Phosphopantetheine adenylyltransferase.